Consider the following 690-residue polypeptide: MSSKGDLSRCRNIGIMAHIDAGKTTTTERILFYTGKQNRIGEVHEGAASMDWMEQERERGITITSAATTCFWNDCRINIIDTPGHVDFTIEVERSLRVLDGAVAVFDGVAGVEPQSETVWRQADKYDVPRICFVNKMDRIGADFYACVDMIKDRLGAVPLVLQLPIGVDKSFVGVVDLVEMRSITWEEDSLGAKFNYGEIPSDLMEKAQDYRARLIESAVEMNDEAMNLYLDGGEISVPLLKSCIRSGVIGAKFVPVLCGSAFKNKGVQPLLDAVVDFLPSPSDVPTIEGASASDPQKAVTIKSSVDDKFVALAFKVMVDRFVGSLTFIRVYSGKLTGKSVVLNSAKGATESVGRILRMHANNREDISEIQAGDIAALAGLKKTTTGDTLCDQNFPVVLEKMDFPESVMEIAVEPVSTADQEKMGTALSRLVAEDPSLKVCVNSESGQTILKGMGELHLEIIVDRMKREFGVEASVGAPQVAYRETITKSAEIEYVHKKQTGGAGQFAKVNILFEPLPPGSGFEFENKITCGAIPKEYIPGVQSGLELVKETGMIAGFPVIDFKATLFDGAFHEVDSSPLAFELAAKGAFREMANKAGPVLLEPIMRVEIITPDEYMGDVIGDVNSRRGRVAEMQDRHNAKLITAFIPLGKMFGYVKDLRSMSQGRAQYSMYFARYERVPENAVDNVMKK.

The region spanning 8–283 (SRCRNIGIMA…AVVDFLPSPS (276 aa)) is the tr-type G domain. GTP-binding positions include 17-24 (AHIDAGKT), 81-85 (DTPGH), and 135-138 (NKMD).

This sequence belongs to the TRAFAC class translation factor GTPase superfamily. Classic translation factor GTPase family. EF-G/EF-2 subfamily.

The protein localises to the cytoplasm. Its function is as follows. Catalyzes the GTP-dependent ribosomal translocation step during translation elongation. During this step, the ribosome changes from the pre-translocational (PRE) to the post-translocational (POST) state as the newly formed A-site-bound peptidyl-tRNA and P-site-bound deacylated tRNA move to the P and E sites, respectively. Catalyzes the coordinated movement of the two tRNA molecules, the mRNA and conformational changes in the ribosome. The protein is Elongation factor G of Anaplasma marginale (strain Florida).